Reading from the N-terminus, the 214-residue chain is MRIMLLGAPGAGKGTQAQFIMEKYGVPQISTGDMLRAAVKAGTPLGLEAKKVMDAGQLVSDELIIGLVKERVAQDDCAAGFLLDGFPRTIPQADAMASSGIALDHVIEIDVPDEEIVKRMSGRRVHPGSGRVYHIVFNQPKVEGKDDVTGEDLAIRPDDEESTVRKRLDIYHEQTKPLVEYYGAVAAKGDVTYNKFDGTQSVATVSDEIVAVLS.

10-15 lines the ATP pocket; the sequence is GAGKGT. Residues 30–59 are NMP; sequence STGDMLRAAVKAGTPLGLEAKKVMDAGQLV. AMP-binding positions include T31, R36, 57–59, 85–88, and Q92; these read QLV and GFPR. The LID stretch occupies residues 122–159; the sequence is GRRVHPGSGRVYHIVFNQPKVEGKDDVTGEDLAIRPDD. Residues R123 and 132-133 each bind ATP; that span reads VY. AMP contacts are provided by R156 and R167. An ATP-binding site is contributed by Q200.

It belongs to the adenylate kinase family. In terms of assembly, monomer.

It localises to the cytoplasm. The catalysed reaction is AMP + ATP = 2 ADP. It functions in the pathway purine metabolism; AMP biosynthesis via salvage pathway; AMP from ADP: step 1/1. Its function is as follows. Catalyzes the reversible transfer of the terminal phosphate group between ATP and AMP. Plays an important role in cellular energy homeostasis and in adenine nucleotide metabolism. This is Adenylate kinase from Shewanella halifaxensis (strain HAW-EB4).